The chain runs to 119 residues: Ribosome-binding factor A (119 aa).

This sequence belongs to the RbfA family. In terms of assembly, monomer. Binds 30S ribosomal subunits, but not 50S ribosomal subunits or 70S ribosomes.

Its subcellular location is the cytoplasm. One of several proteins that assist in the late maturation steps of the functional core of the 30S ribosomal subunit. Associates with free 30S ribosomal subunits (but not with 30S subunits that are part of 70S ribosomes or polysomes). Required for efficient processing of 16S rRNA. May interact with the 5'-terminal helix region of 16S rRNA. The polypeptide is Ribosome-binding factor A (Geobacter sp. (strain M21)).